Here is a 760-residue protein sequence, read N- to C-terminus: Serine/threonine-protein kinase Haspin homolog ALK1 (760 aa).

2 positions are modified to phosphoserine: Ser-76 and Ser-79. Disordered stretches follow at residues 76–100 (SDASLNVTTGNNTSRKTTSNSKKRW), 123–153 (SSFTSESHKDRESRNVLQQKRKSLQSYSSLD), 187–264 (DDIS…STVS), and 362–408 (KRNS…CSYS). The segment covering 78–95 (ASLNVTTGNNTSRKTTSN) has biased composition (polar residues). The KEN box signature appears at 200 to 202 (KEN). Residues 209 to 220 (KKNSSIASTSSE) show a composition bias toward polar residues. The short motif at 224 to 232 (RTPLKPLVN) is the D box element. Residues 237-250 (PTSQPQQQQPLYNA) are compositionally biased toward polar residues. Residues 251-264 (SLSSRRSSISSTVS) are compositionally biased toward low complexity. A compositionally biased stretch (basic residues) spans 362-386 (KRNSQSSLKHKSSHASLQKFKRNKG). Over residues 398–408 (NSSNDDSCSYS) the composition is skewed to low complexity. The Protein kinase domain maps to 468 to 760 (NCDIKRILNP…NTGDLLKLYK (293 aa)). ATP contacts are provided by residues 474-482 (ILNPAKGDV) and Lys-510.

It belongs to the protein kinase superfamily. Ser/Thr protein kinase family. Haspin subfamily. In terms of processing, periodically phosphorylated during the cell cycle with a phosphorylation peak during mitosis and hyperphosphorylated after DNA damage.

The enzyme catalyses L-seryl-[protein] + ATP = O-phospho-L-seryl-[protein] + ADP + H(+). It catalyses the reaction L-threonyl-[protein] + ATP = O-phospho-L-threonyl-[protein] + ADP + H(+). Serine/threonine haspin-like protein kinase involved in cell cycle regulation. The chain is Serine/threonine-protein kinase Haspin homolog ALK1 (ALK1) from Saccharomyces cerevisiae (strain ATCC 204508 / S288c) (Baker's yeast).